Reading from the N-terminus, the 178-residue chain is Large ribosomal subunit protein uL6 (178 aa).

Belongs to the universal ribosomal protein uL6 family. Part of the 50S ribosomal subunit.

This protein binds to the 23S rRNA, and is important in its secondary structure. It is located near the subunit interface in the base of the L7/L12 stalk, and near the tRNA binding site of the peptidyltransferase center. The sequence is that of Large ribosomal subunit protein uL6 from Tropheryma whipplei (strain TW08/27) (Whipple's bacillus).